A 334-amino-acid chain; its full sequence is MTLSGKPAALLVGTLKHAHKEWEALGKYAELKTYSDGTREDFLAKCKTEFQNVKAICRTYNSKFYMGIFDKEIIDNLPPSVKFICHLGAGYETVDVAACTARGIQVSHVPKAVDDATADVGIFLMLGALRGFNQGIFELHKNNWNANCKPSHDPEGKTLGILGLGGIGKTMAKRARAFDMKIVYHNRTPLPEEEAEGAEFVSFDDLLAKSDVLSLNLPLNAHTRHIIGKPEFQKMKRGIVIVNTARGAVMDEAALVEALDEGIVYSAGLDVFEEEPKIHPGLLENEKVILLPHLGTNSLETQYKMECAVLMNVKNGIVNDSLPNLVPEQRGDIE.

Residues 166-167 (GI), 244-246 (TAR), and aspartate 270 contribute to the NAD(+) site. Arginine 246 is a catalytic residue. Glutamate 275 is an active-site residue. The active-site Proton donor is the histidine 293. An NAD(+)-binding site is contributed by 293–296 (HLGT).

This sequence belongs to the D-isomer specific 2-hydroxyacid dehydrogenase family.

In Schizosaccharomyces pombe (strain 972 / ATCC 24843) (Fission yeast), this protein is Putative 2-hydroxyacid dehydrogenase UNK4.10.